We begin with the raw amino-acid sequence, 138 residues long: Small ribosomal subunit protein uS11 (138 aa).

2 disordered regions span residues 1-29 (MPPK…PHGA) and 117-138 (GAIS…RRRV). Residues 13-22 (KGQKTRRREK) show a composition bias toward basic residues.

Belongs to the universal ribosomal protein uS11 family. As to quaternary structure, part of the 30S ribosomal subunit. Interacts with proteins S7 and S18. Binds to IF-3.

In terms of biological role, located on the platform of the 30S subunit, it bridges several disparate RNA helices of the 16S rRNA. Forms part of the Shine-Dalgarno cleft in the 70S ribosome. The polypeptide is Small ribosomal subunit protein uS11 (Mycobacterium ulcerans (strain Agy99)).